Reading from the N-terminus, the 338-residue chain is D-erythrose-4-phosphate dehydrogenase (338 aa).

11–12 (RI) lines the NAD(+) pocket. Substrate-binding positions include 153–155 (SCT), Arg-199, 212–213 (TK), and Arg-235. Cys-154 acts as the Nucleophile in catalysis. Asn-317 serves as a coordination point for NAD(+).

It belongs to the glyceraldehyde-3-phosphate dehydrogenase family. Epd subfamily. Homotetramer.

It is found in the cytoplasm. The catalysed reaction is D-erythrose 4-phosphate + NAD(+) + H2O = 4-phospho-D-erythronate + NADH + 2 H(+). It participates in cofactor biosynthesis; pyridoxine 5'-phosphate biosynthesis; pyridoxine 5'-phosphate from D-erythrose 4-phosphate: step 1/5. Functionally, catalyzes the NAD-dependent conversion of D-erythrose 4-phosphate to 4-phosphoerythronate. The sequence is that of D-erythrose-4-phosphate dehydrogenase from Shewanella baltica (strain OS223).